A 152-amino-acid polypeptide reads, in one-letter code: Small ribosomal subunit protein uS13 (152 aa).

It belongs to the universal ribosomal protein uS13 family.

The protein localises to the cytoplasm. Functionally, located at the top of the head of the 40S subunit, it contacts several helices of the 18S rRNA. The polypeptide is Small ribosomal subunit protein uS13 (RPS18) (Branchiostoma belcheri (Amphioxus)).